A 307-amino-acid polypeptide reads, in one-letter code: 1-aminocyclopropane-1-carboxylate oxidase 5 (307 aa).

Residues 106-134 (SNIKETMGEYREEVRKLASKMMEVMDENL) are a coiled coil. The region spanning 152 to 256 (GEETAFFGTK…RRSIASFYNP (105 aa)) is the Fe2OG dioxygenase domain. Positions 180, 182, and 237 each coordinate Fe cation. Arg-247 is a 2-oxoglutarate binding site.

The protein belongs to the iron/ascorbate-dependent oxidoreductase family. Fe(2+) is required as a cofactor.

It catalyses the reaction 1-aminocyclopropane-1-carboxylate + L-ascorbate + O2 = ethene + L-dehydroascorbate + hydrogen cyanide + CO2 + 2 H2O. It participates in alkene biosynthesis; ethylene biosynthesis via S-adenosyl-L-methionine; ethylene from S-adenosyl-L-methionine: step 2/2. Its function is as follows. Enzyme involved in the ethylene biosynthesis. The polypeptide is 1-aminocyclopropane-1-carboxylate oxidase 5 (Arabidopsis thaliana (Mouse-ear cress)).